The chain runs to 191 residues: Cell division protein SepF (191 aa).

Residues 150–191 (TSSSPEEASPSSVSPKNTPQYSVENNTAPEPAWGNSKLSAFS) form a disordered region. Residues 151–164 (SSSPEEASPSSVSP) are compositionally biased toward low complexity. Residues 165-177 (KNTPQYSVENNTA) show a composition bias toward polar residues.

This sequence belongs to the SepF family. In terms of assembly, homodimer. Interacts with FtsZ.

It is found in the cytoplasm. Cell division protein that is part of the divisome complex and is recruited early to the Z-ring. Probably stimulates Z-ring formation, perhaps through the cross-linking of FtsZ protofilaments. Its function overlaps with FtsA. The protein is Cell division protein SepF of Prochlorococcus marinus (strain MIT 9312).